Consider the following 482-residue polypeptide: CBL-interacting serine/threonine-protein kinase 23 (482 aa).

The span at M1 to R25 shows a compositional bias: low complexity. The segment at M1–G29 is disordered. Residues Y31–F286 enclose the Protein kinase domain. ATP is bound by residues L37–V45 and K60. The active-site Proton acceptor is D154. The activation loop stretch occupies residues D172–E201. At S176 the chain carries Phosphoserine. T190 carries the phosphothreonine modification. The region spanning K328–E352 is the NAF domain. The tract at residues K359–V388 is PPI. A disordered region spans residues K459 to T482.

Belongs to the protein kinase superfamily. CAMK Ser/Thr protein kinase family. SNF1 subfamily. Part of a K(+)-channel calcium-sensing kinase/phosphatase complex composed by a calcium sensor CBL (CBL1, CBL2, CBL3 or CBL9), a kinase CIPK (CIPK6, CIPK16 or CIPK23), a phosphatase PP2C (AIP1) and a K(+)-channel (AKT1). Interacts with AKT1, CBL1, CBL2, CBL3, CBL5, CBL8, CBL9 and NRT1.1. It depends on Mn(2+) as a cofactor. Autophosphorylated. As to expression, in seedlings, mostly in vascular bundles, and in roots, especially in cortex and endodermis cells. In adult plants, mostly expressed in flowers, and, to a lower extent, in roots, leaves, stems and siliques, particularly in vascular tissues. Also detected in guard cells and root hairs.

The protein localises to the cell membrane. It carries out the reaction L-seryl-[protein] + ATP = O-phospho-L-seryl-[protein] + ADP + H(+). It catalyses the reaction L-threonyl-[protein] + ATP = O-phospho-L-threonyl-[protein] + ADP + H(+). Its function is as follows. CIPK serine-threonine protein kinases interact with CBL proteins. Binding of a CBL protein to the regulatory NAF domain of CIPK protein leads to activation of the kinase in a calcium-dependent manner. Downstream of CBL1, CBL2, CBL3 and CBL9, regulates by phosphorylation the K(+) conductance and uptake of AKT1 in low K(+) condition, in response to calcium signaling and during the stomatal opening regulation by monitoring the turgor pressure in guard cells. In response to low nitrate concentration, phosphorylates NRT1.1, switching it from a low-affinity nitrate transporter to a high-affinity transporter. Confers tolerance to low potassium conditions. Involved in drought sensitivity and leaf transpiration. This chain is CBL-interacting serine/threonine-protein kinase 23 (CIPK23), found in Arabidopsis thaliana (Mouse-ear cress).